Reading from the N-terminus, the 321-residue chain is Sideroflexin-1-3 (321 aa).

Transmembrane regions (helical) follow at residues 101–121 (IITGGMMAFYKSTPAVVFWQW), 146–168 (LVTSYCLATSGALVTALSLNHAV), 174–194 (LLGRLVPLVAVGAANCINIPC), 220–240 (AAVVGISTVILSRIAMAIPGM), and 266–286 (IQTLFCGFVLIFATPLGCAFF).

The protein belongs to the sideroflexin family.

It is found in the mitochondrion membrane. Mitochondrial amino-acid transporter that mediates transport of serine into mitochondria. The protein is Sideroflexin-1-3 of Drosophila melanogaster (Fruit fly).